A 397-amino-acid polypeptide reads, in one-letter code: Acetate kinase (397 aa).

Residue N7 coordinates Mg(2+). K14 is a binding site for ATP. R91 is a binding site for substrate. The active-site Proton donor/acceptor is D148. Residues 208 to 212, 283 to 285, and 331 to 335 contribute to the ATP site; these read HIGNG, DMR, and GVGEN. E384 contributes to the Mg(2+) binding site.

This sequence belongs to the acetokinase family. In terms of assembly, homodimer. Mg(2+) is required as a cofactor. Mn(2+) serves as cofactor.

It localises to the cytoplasm. The enzyme catalyses acetate + ATP = acetyl phosphate + ADP. The protein operates within metabolic intermediate biosynthesis; acetyl-CoA biosynthesis; acetyl-CoA from acetate: step 1/2. Catalyzes the formation of acetyl phosphate from acetate and ATP. Can also catalyze the reverse reaction. The protein is Acetate kinase of Azobacteroides pseudotrichonymphae genomovar. CFP2.